The sequence spans 165 residues: Nucleotide-binding protein Ccon26_01810 (165 aa).

Belongs to the YajQ family.

Its function is as follows. Nucleotide-binding protein. The protein is Nucleotide-binding protein Ccon26_01810 of Campylobacter concisus (strain 13826).